A 98-amino-acid polypeptide reads, in one-letter code: Co-chaperonin GroES (98 aa).

The protein belongs to the GroES chaperonin family. In terms of assembly, heptamer of 7 subunits arranged in a ring. Interacts with the chaperonin GroEL.

Its subcellular location is the cytoplasm. Its function is as follows. Together with the chaperonin GroEL, plays an essential role in assisting protein folding. The GroEL-GroES system forms a nano-cage that allows encapsulation of the non-native substrate proteins and provides a physical environment optimized to promote and accelerate protein folding. GroES binds to the apical surface of the GroEL ring, thereby capping the opening of the GroEL channel. The chain is Co-chaperonin GroES from Bartonella quintana (strain Toulouse) (Rochalimaea quintana).